The following is a 988-amino-acid chain: Putative disease resistance protein RGA4 (988 aa).

The NB-ARC domain occupies 137 to 439; it reads AAAATRETGF…MAHGFLLSKG (303 aa). Residue 184–191 participates in ATP binding; sequence GMGGLGKT. LRR repeat units lie at residues 526–548, 549–572, 574–595, 596–620, 638–662, 674–696, 751–776, 784–808, 829–851, 852–876, 878–900, 901–925, 927–950, and 966–988; these read FVSLRVLNLSYSKLEQLPSSIGD, LLHLRYLDLSCNNFRSLPERLCKL, NLQTLDVHNCYSLNCLPKQTSK, LSSLRHLVVDGCPLTSTPPRIGLLT, LGELKNLNLCGSISITHLERVKNDT, LQSLSMSWDNDGPNRYESKEVKV, LPCLENLELQNGSAEVEYVEEDDVHS, FPSLKKLRIWFFRSLKGLMKEEGEE, LSSVKKLEVHGNTNTRGLSSISN, LSTLTSLRIGANYRATSLPEEMFTS, TNLEFLSFFDFKNLKDLPTSLTS, LNALKRLQIESCDSLESFPEQGLEG, TSLTQLFVKYCKMLKCLPEGLQHL, and KRCDKEIGEDWHKIAHIPNLDIH.

It belongs to the disease resistance NB-LRR family.

Its function is as follows. Disease resistance protein. Resistance proteins guard the plant against pathogens that contain an appropriate avirulence protein via a direct or indirect interaction with this avirulence protein. That triggers a defense system which restricts the pathogen growth. The chain is Putative disease resistance protein RGA4 (RGA4) from Solanum bulbocastanum (Wild potato).